A 172-amino-acid polypeptide reads, in one-letter code: MKQKLLMLLLLGSVSLFANEAAASGGTDIIPRTVNFLIFAAILYYLAAEPIKRFFQERKEGIAKRLEEVEAKLKEAKEEKAQAEAELKKAKELAQEIVETAKQEIEILTKEIKEQAKQEIEMLEKSFEESMELEKRKRVRAITKEVLEELFEEKALELEKEKFVNLIVKKVA.

The helical transmembrane segment at 5-24 threads the bilayer; sequence LLMLLLLGSVSLFANEAAAS.

Belongs to the ATPase B chain family. In terms of assembly, F-type ATPases have 2 components, F(1) - the catalytic core - and F(0) - the membrane proton channel. F(1) has five subunits: alpha(3), beta(3), gamma(1), delta(1), epsilon(1). F(0) has three main subunits: a(1), b(2) and c(10-14). The alpha and beta chains form an alternating ring which encloses part of the gamma chain. F(1) is attached to F(0) by a central stalk formed by the gamma and epsilon chains, while a peripheral stalk is formed by the delta and b chains.

The protein localises to the cell inner membrane. Functionally, f(1)F(0) ATP synthase produces ATP from ADP in the presence of a proton or sodium gradient. F-type ATPases consist of two structural domains, F(1) containing the extramembraneous catalytic core and F(0) containing the membrane proton channel, linked together by a central stalk and a peripheral stalk. During catalysis, ATP synthesis in the catalytic domain of F(1) is coupled via a rotary mechanism of the central stalk subunits to proton translocation. In terms of biological role, component of the F(0) channel, it forms part of the peripheral stalk, linking F(1) to F(0). This chain is ATP synthase subunit b, found in Nitratiruptor sp. (strain SB155-2).